Consider the following 363-residue polypeptide: 2,5-diketocamphane 1,2-monooxygenase 1 (363 aa).

Residues M74 and 186–194 (TGLTKNSSS) each bind FMN.

This sequence belongs to the bacterial luciferase oxidoreductase family. Homodimer. Likely forms a loose transient complex with a P.putida flavin reductase that provides the required FMNH(2) to the enzyme.

It catalyses the reaction (1R,4R)-bornane-2,5-dione + FMNH2 + O2 = (1R,4R)-5-oxo-1,2-campholide + FMN + H2O + H(+). The protein operates within terpene metabolism; (R)-camphor degradation. In terms of biological role, involved in the degradation and assimilation of (+)-camphor, which allows P.putida strain NCIMB 10007 to grow on this enantiomer of camphor as the sole carbon source. Catalyzes the FMNH(2)-dependent lactonization of 2,5-diketocamphane via a Baeyer-Villiger oxidation to produce the unstable lactone 5-oxo-1,2-campholide with (R,R) configuration, that presumably undergoes spontaneous hydrolysis to form 2-oxo-Delta(3)-4,5,5-trimethylcyclopentenylacetate. Is also able to convert (+)-camphor and norcamphor to the corresponding lactone in vitro. Shows no conversion of (-)-camphor, (+)-fenchone, (-)-fenchone, and (+)-nopinone. Acts only on bicyclic ketones; is not active towards monocyclic ketones, aromatic ketones, the aliphatic 2-decanone, 1-indanone and progesterone. The sequence is that of 2,5-diketocamphane 1,2-monooxygenase 1 from Pseudomonas putida (Arthrobacter siderocapsulatus).